Consider the following 246-residue polypeptide: Ubiquitin-conjugating enzyme E2 6 (246 aa).

The Cytoplasmic portion of the chain corresponds to 1–224 (MATKQAQKRL…LEKQHNDKPN (224 aa)). The region spanning 5-154 (QAQKRLTKEY…FNSTRFKLVF (150 aa)) is the UBC core domain. Cysteine 87 acts as the Glycyl thioester intermediate in catalysis. The helical transmembrane segment at 225–245 (GSSSMFYIGVALFLFLVGLFM) threads the bilayer.

The protein belongs to the ubiquitin-conjugating enzyme family.

The protein resides in the endoplasmic reticulum membrane. The enzyme catalyses S-ubiquitinyl-[E1 ubiquitin-activating enzyme]-L-cysteine + [E2 ubiquitin-conjugating enzyme]-L-cysteine = [E1 ubiquitin-activating enzyme]-L-cysteine + S-ubiquitinyl-[E2 ubiquitin-conjugating enzyme]-L-cysteine.. Its pathway is protein modification; protein ubiquitination. In terms of biological role, catalyzes the covalent attachment of ubiquitin to other proteins. Functions in degradation of misfolded or regulated proteins localized in the endoplasmic reticulum (ER) lumen or membrane via the ubiquitin-proteasome system. Cognate E2 conjugating enzyme for the DOA10 ubiquitin ligase complex, which is part of the ERAD-C pathway responsible for the rapid degradation of membrane proteins with misfolded cytoplasmic domains. This Candida glabrata (strain ATCC 2001 / BCRC 20586 / JCM 3761 / NBRC 0622 / NRRL Y-65 / CBS 138) (Yeast) protein is Ubiquitin-conjugating enzyme E2 6 (UBC6).